Consider the following 496-residue polypeptide: NADP-dependent glyceraldehyde-3-phosphate dehydrogenase (496 aa).

Residues Arg-116 and 169 to 170 (NY) each bind substrate. Residues Lys-192, Thr-195, and Asp-230 each coordinate NADP(+). 245 to 249 (GGDTG) is an NAD(+) binding site. Glu-264 functions as the Proton acceptor in the catalytic mechanism. 297–299 (RCT) contributes to the substrate binding site. Cys-298 functions as the Nucleophile in the catalytic mechanism. Glu-391 provides a ligand contact to NADP(+). Substrate is bound at residue Arg-451.

The protein belongs to the aldehyde dehydrogenase family.

It localises to the cytoplasm. The protein localises to the cytosol. The enzyme catalyses D-glyceraldehyde 3-phosphate + NADP(+) + H2O = (2R)-3-phosphoglycerate + NADPH + 2 H(+). Its activity is regulated as follows. Competitive inhibition by NADPH, 3-phospho-D-glycerate and ATP. Functionally, important as a means of generating NADPH for biosynthetic reactions. May be a main source of cytosolic NADPH for mannitol biosynthesis in leaves. In Apium graveolens (Celery), this protein is NADP-dependent glyceraldehyde-3-phosphate dehydrogenase.